The following is a 428-amino-acid chain: MAQILAASPTCQMRLTKPSSIASSKLWNSVVLKQKKQSSSKVRSFKVMALQSDNSTINRVESLLNLDTKPFTDRIIAEYIWIGGSGIDLRSKSRTLEKPVEDPSELPKWNYDGSSTGQAPGEDSEVILYPQAIFRDPFRGGNNILVICDTYTPAGEPIPTNKRARAAEIFSNKKVNEEIPWFGIEQEYTLLQPNVNWPLGWPVGAYPGPQGPYYCGVGAEKSWGRDISDAHYKACLYAGINISGTNGEVMPGQWEFQVGPSVGIEAGDHVWCARYLLERITEQAGVVLTLDPKPIEGDWNGAGCHTNYSTKSMREDGGFEVIKKAILNLSLRHMEHISAYGEGNERRLTGKHETASIDQFSWGVANRGCSIRVGRDTEKKGKGYLEDRRPASNMDPYIVTSLLAETTLLWEPTLEAEALAAQKLSLKV.

The N-terminal 49 residues, 1–49 (MAQILAASPTCQMRLTKPSSIASSKLWNSVVLKQKKQSSSKVRSFKVMA), are a transit peptide targeting the chloroplast. The region spanning 75 to 155 (IIAEYIWIGG…VICDTYTPAG (81 aa)) is the GS beta-grasp domain. A disordered region spans residues 94–120 (RTLEKPVEDPSELPKWNYDGSSTGQAP). Phosphoserine is present on Ser-104. Positions 159–428 (PTNKRARAAE…LAAQKLSLKV (270 aa)) constitute a GS catalytic domain.

The protein belongs to the glutamine synthetase family. As to quaternary structure, homooctamer.

The protein resides in the plastid. It is found in the chloroplast. It catalyses the reaction L-glutamate + NH4(+) + ATP = L-glutamine + ADP + phosphate + H(+). Functionally, the light-modulated chloroplast enzyme, encoded by a nuclear gene and expressed primarily in leaves, is responsible for the reassimilation of the ammonia generated by photorespiration. This Brassica napus (Rape) protein is Glutamine synthetase, chloroplastic (GLN2).